A 195-amino-acid polypeptide reads, in one-letter code: uncharacterized protein (195 aa).

The signal sequence occupies residues 1–21 (MHFSSCVLVSALAIVTNVATA). Asn-62 and Asn-109 each carry an N-linked (GlcNAc...) asparagine glycan. A disordered region spans residues 119–141 (DWDEDTVTGENAPDSGEPFSTSH).

It is found in the secreted. This is an uncharacterized protein from Arthroderma benhamiae (strain ATCC MYA-4681 / CBS 112371) (Trichophyton mentagrophytes).